Consider the following 380-residue polypeptide: 3-isopropylmalate dehydratase large subunit (380 aa).

[4Fe-4S] cluster-binding residues include Cys262, Cys320, and Cys323.

This sequence belongs to the aconitase/IPM isomerase family. LeuC type 2 subfamily. As to quaternary structure, heterodimer of LeuC and LeuD. Requires [4Fe-4S] cluster as cofactor.

It carries out the reaction (2R,3S)-3-isopropylmalate = (2S)-2-isopropylmalate. The protein operates within amino-acid biosynthesis; L-leucine biosynthesis; L-leucine from 3-methyl-2-oxobutanoate: step 2/4. Functionally, catalyzes the isomerization between 2-isopropylmalate and 3-isopropylmalate, via the formation of 2-isopropylmaleate. This chain is 3-isopropylmalate dehydratase large subunit, found in Pyrococcus horikoshii (strain ATCC 700860 / DSM 12428 / JCM 9974 / NBRC 100139 / OT-3).